The following is a 151-amino-acid chain: Sperm surface protein Sp17 (151 aa).

Residues 68–98 (FYNNHAFEEQEPPEKSDPKQEESQIPGKEEE) show a composition bias toward basic and acidic residues. Disordered regions lie at residues 68–115 (FYNN…EKEE) and 130–151 (AREE…EENK). The IQ domain maps to 114 to 143 (EEVAAVKIQAAFRGHVAREEVKKMKTDSLQ).

In terms of assembly, homodimer. May interact with ROPN1. Testis- and sperm-specific.

The protein localises to the membrane. Functionally, sperm surface zona pellucida binding protein. Helps to bind spermatozoa to the zona pellucida with high affinity. Might function in binding zona pellucida and carbohydrates. The polypeptide is Sperm surface protein Sp17 (SPA17) (Macaca fascicularis (Crab-eating macaque)).